The following is a 487-amino-acid chain: Glutamate--tRNA ligase (487 aa).

Positions 10–20 (PSPTGYMHVGN) match the 'HIGH' region motif. Positions 251–255 (KLSKR) match the 'KMSKS' region motif. Lys-254 contributes to the ATP binding site.

It belongs to the class-I aminoacyl-tRNA synthetase family. Glutamate--tRNA ligase type 1 subfamily. Monomer.

It is found in the cytoplasm. The enzyme catalyses tRNA(Glu) + L-glutamate + ATP = L-glutamyl-tRNA(Glu) + AMP + diphosphate. In terms of biological role, catalyzes the attachment of glutamate to tRNA(Glu) in a two-step reaction: glutamate is first activated by ATP to form Glu-AMP and then transferred to the acceptor end of tRNA(Glu). In Clostridium kluyveri (strain ATCC 8527 / DSM 555 / NBRC 12016 / NCIMB 10680 / K1), this protein is Glutamate--tRNA ligase.